The chain runs to 161 residues: Allophycocyanin beta chain (161 aa).

The residue at position 71 (Asn-71) is an N4-methylasparagine. Cys-81 contacts (2R,3E)-phycocyanobilin.

This sequence belongs to the phycobiliprotein family. As to quaternary structure, heterodimer of an alpha and a beta chain. Contains one covalently linked phycocyanobilin chromophore.

It localises to the plastid. Its subcellular location is the chloroplast thylakoid membrane. Light-harvesting photosynthetic bile pigment-protein from the phycobiliprotein complex. Allophycocyanin has a maximum absorption at approximately 650 nanometers. The polypeptide is Allophycocyanin beta chain (apcB) (Cyanidium caldarium (Red alga)).